An 860-amino-acid chain; its full sequence is Leucine--tRNA ligase (860 aa).

Positions 42 to 52 (PYPSGRLHMGH) match the 'HIGH' region motif. Positions 619–623 (KMSKS) match the 'KMSKS' region motif. Lys622 is an ATP binding site.

It belongs to the class-I aminoacyl-tRNA synthetase family.

It is found in the cytoplasm. It catalyses the reaction tRNA(Leu) + L-leucine + ATP = L-leucyl-tRNA(Leu) + AMP + diphosphate. This chain is Leucine--tRNA ligase, found in Actinobacillus succinogenes (strain ATCC 55618 / DSM 22257 / CCUG 43843 / 130Z).